Consider the following 202-residue polypeptide: Chromophore lyase CpcT/CpeT 2 (202 aa).

The protein belongs to the CpcT/CpeT biliprotein lyase family.

In terms of biological role, covalently attaches a chromophore to Cys residue(s) of phycobiliproteins. The chain is Chromophore lyase CpcT/CpeT 2 from Gloeobacter violaceus (strain ATCC 29082 / PCC 7421).